Consider the following 371-residue polypeptide: Cytochrome b (371 aa).

Helical transmembrane passes span 25-45, 69-90, 105-125, and 170-190; these read FGSMLLTCLGLQVLTGFFLAV, WMMQNLHAIGASMFFICIYIHI, WMSGITLLITLMATAFFGYVL, and FFALHFILPFAIISLSSLHII. Residues H75 and H89 each contribute to the heme b site. Heme b contacts are provided by H174 and H188. H193 is a binding site for a ubiquinone. The next 4 helical transmembrane spans lie at 218 to 238, 280 to 300, 312 to 332, and 339 to 358; these read HKDLLLLTLMIMSLFIISSFF, LGGALALVMSIMILFIIPFTH, LSQLMFWTLVSTFITITWAAT, and FIVISQVTSSLYFTFFLSTP.

Belongs to the cytochrome b family. The cytochrome bc1 complex contains 3 respiratory subunits (MT-CYB, CYC1 and UQCRFS1), 2 core proteins (UQCRC1 and UQCRC2) and probably 6 low-molecular weight proteins. It depends on heme b as a cofactor.

It is found in the mitochondrion inner membrane. Component of the ubiquinol-cytochrome c reductase complex (complex III or cytochrome b-c1 complex) that is part of the mitochondrial respiratory chain. The b-c1 complex mediates electron transfer from ubiquinol to cytochrome c. Contributes to the generation of a proton gradient across the mitochondrial membrane that is then used for ATP synthesis. The polypeptide is Cytochrome b (MT-CYB) (Aspidites melanocephalus (Black-headed python)).